Consider the following 393-residue polypeptide: Protein TsgA (393 aa).

12 helical membrane-spanning segments follow: residues 11–31 (WISFLSYALTGALVIVTGMVM), 51–71 (FLNAGILISIFLNAWLMEIIP), 78–98 (FGFILMVLAVAGLMFSHSLAL), 101–121 (AAMFVLGLVSGITMSIGTFLI), 134–154 (LLFTDSFFSMAGMIFPMVAAF), 162–182 (WYWVYACIGLVYLAIFILTFG), 206–226 (IGVLFLAVAALCYILGQLGFI), 245–265 (ALVSDFWMSYMFGMWAFSFIL), 273–293 (ILTVLAGMAAVLMYLFITGTQ), 298–318 (WFILTLGFFSSAIYTSIITLG), 332–352 (FILTCGTIGTMLTFVVTGPIV), and 361–381 (LLTANGLYAVVFVMCFALGFV).

The protein belongs to the major facilitator superfamily. TsgA family.

Its subcellular location is the cell inner membrane. The polypeptide is Protein TsgA (Salmonella paratyphi B (strain ATCC BAA-1250 / SPB7)).